Consider the following 260-residue polypeptide: NH(3)-dependent NAD(+) synthetase (260 aa).

31 to 38 (GLSGGLDS) provides a ligand contact to ATP. Aspartate 37 is a binding site for Mg(2+). Residue arginine 112 participates in deamido-NAD(+) binding. Threonine 132 contributes to the ATP binding site. Residue glutamate 137 participates in Mg(2+) binding. The ATP site is built by lysine 161 and serine 183.

The protein belongs to the NAD synthetase family. As to quaternary structure, homodimer.

The enzyme catalyses deamido-NAD(+) + NH4(+) + ATP = AMP + diphosphate + NAD(+) + H(+). The protein operates within cofactor biosynthesis; NAD(+) biosynthesis; NAD(+) from deamido-NAD(+) (ammonia route): step 1/1. Functionally, catalyzes the ATP-dependent amidation of deamido-NAD to form NAD. Uses ammonia as a nitrogen source. The chain is NH(3)-dependent NAD(+) synthetase from Helicobacter pylori (strain HPAG1).